The sequence spans 310 residues: Protease HtpX homolog (310 aa).

2 helical membrane passes run N16 to I36 and I55 to I75. Position 166 (H166) interacts with Zn(2+). E167 is an active-site residue. H170 is a binding site for Zn(2+). 2 consecutive transmembrane segments (helical) span residues V182–G202 and M214–L234. Zn(2+) is bound at residue E239.

Belongs to the peptidase M48B family. Requires Zn(2+) as cofactor.

The protein resides in the cell inner membrane. The protein is Protease HtpX homolog of Helicobacter pylori (strain J99 / ATCC 700824) (Campylobacter pylori J99).